The following is an 88-amino-acid chain: RNA-binding protein Hfq (88 aa).

Residues 10–70 (DRFLNILRTK…ISTILPAEYI (61 aa)) enclose the Sm domain.

The protein belongs to the Hfq family. In terms of assembly, homohexamer.

Functionally, RNA chaperone that binds small regulatory RNA (sRNAs) and mRNAs to facilitate mRNA translational regulation in response to envelope stress, environmental stress and changes in metabolite concentrations. Also binds with high specificity to tRNAs. This is RNA-binding protein Hfq from Fervidobacterium nodosum (strain ATCC 35602 / DSM 5306 / Rt17-B1).